Consider the following 354-residue polypeptide: Probable butyrate kinase (354 aa).

It belongs to the acetokinase family.

It localises to the cytoplasm. The catalysed reaction is butanoate + ATP = butanoyl phosphate + ADP. This Phocaeicola vulgatus (strain ATCC 8482 / DSM 1447 / JCM 5826 / CCUG 4940 / NBRC 14291 / NCTC 11154) (Bacteroides vulgatus) protein is Probable butyrate kinase.